The chain runs to 140 residues: Large ribosomal subunit protein uL14 (140 aa).

The protein belongs to the universal ribosomal protein uL14 family.

This is Large ribosomal subunit protein uL14 (RPL23) from Brugia malayi (Filarial nematode worm).